Reading from the N-terminus, the 1358-residue chain is DNA-directed RNA polymerase subunit beta (1358 aa).

Belongs to the RNA polymerase beta chain family. The RNAP catalytic core consists of 2 alpha, 1 beta, 1 beta' and 1 omega subunit. When a sigma factor is associated with the core the holoenzyme is formed, which can initiate transcription.

It carries out the reaction RNA(n) + a ribonucleoside 5'-triphosphate = RNA(n+1) + diphosphate. Its function is as follows. DNA-dependent RNA polymerase catalyzes the transcription of DNA into RNA using the four ribonucleoside triphosphates as substrates. The chain is DNA-directed RNA polymerase subunit beta from Xanthobacter autotrophicus (strain ATCC BAA-1158 / Py2).